Reading from the N-terminus, the 200-residue chain is Superoxide dismutase [Mn] 2 (200 aa).

Positions 28, 76, 158, and 162 each coordinate Mn(2+).

It belongs to the iron/manganese superoxide dismutase family. Requires Mn(2+) as cofactor.

It carries out the reaction 2 superoxide + 2 H(+) = H2O2 + O2. Destroys superoxide anion radicals which are normally produced within the cells and which are toxic to biological systems. In Halobacterium salinarum (strain ATCC 700922 / JCM 11081 / NRC-1) (Halobacterium halobium), this protein is Superoxide dismutase [Mn] 2 (sod2).